The chain runs to 483 residues: Myosin-binding protein H (483 aa).

Residues 1 to 15 are compositionally biased toward polar residues; it reads MTGKATSEASVSTPE. The interval 1–78 is disordered; the sequence is MTGKATSEAS…PEPPSEDVPS (78 aa). Phosphothreonine occurs at positions 2, 6, and 26. The span at 41 to 66 shows a compositional bias: low complexity; that stretch reads QEQAPEPQKPQAQDPAAPAASAMPAA. The region spanning 79 to 174 is the Fibronectin type-III 1 domain; that stretch reads APLRLTLEDV…LDQPVHIQEI (96 aa). One can recognise an Ig-like C2-type 1 domain in the interval 178-266; that stretch reads PKIRVPRHLR…EGLEAKASID (89 aa). The Fibronectin type-III 2 domain occupies 275–370; the sequence is PPSSIKLLDV…TKELAHIHKA (96 aa). The region spanning 388-472 is the Ig-like C2-type 2 domain; it reads PSFTQPLADH…INVLGEASVD (85 aa).

Belongs to the immunoglobulin superfamily. MyBP family. In terms of tissue distribution, skeletal muscle. Expressed at low levels in heart ventricles.

Its function is as follows. Binds to myosin; probably involved in interaction with thick myofilaments in the A-band. The polypeptide is Myosin-binding protein H (Mybph) (Mus musculus (Mouse)).